Reading from the N-terminus, the 92-residue chain is Small ribosomal subunit protein uS19 (92 aa).

This sequence belongs to the universal ribosomal protein uS19 family.

Protein S19 forms a complex with S13 that binds strongly to the 16S ribosomal RNA. This is Small ribosomal subunit protein uS19 from Thermobifida fusca (strain YX).